Consider the following 32-residue polypeptide: Coenzyme PQQ synthesis protein A (32 aa).

Positions glutamate 16–tyrosine 20 form a cross-link, pyrroloquinoline quinone (Glu-Tyr).

This sequence belongs to the PqqA family.

The protein operates within cofactor biosynthesis; pyrroloquinoline quinone biosynthesis. Required for coenzyme pyrroloquinoline quinone (PQQ) biosynthesis. PQQ is probably formed by cross-linking a specific glutamate to a specific tyrosine residue and excising these residues from the peptide. The protein is Coenzyme PQQ synthesis protein A of Dinoroseobacter shibae (strain DSM 16493 / NCIMB 14021 / DFL 12).